The primary structure comprises 467 residues: Light-independent protochlorophyllide reductase subunit N (467 aa).

[4Fe-4S] cluster contacts are provided by Cys-22, Cys-47, and Cys-107.

The protein belongs to the BchN/ChlN family. In terms of assembly, protochlorophyllide reductase is composed of three subunits; ChlL, ChlN and ChlB. Forms a heterotetramer of two ChlB and two ChlN subunits. The cofactor is [4Fe-4S] cluster.

Its subcellular location is the plastid. The protein resides in the chloroplast. It carries out the reaction chlorophyllide a + oxidized 2[4Fe-4S]-[ferredoxin] + 2 ADP + 2 phosphate = protochlorophyllide a + reduced 2[4Fe-4S]-[ferredoxin] + 2 ATP + 2 H2O. The protein operates within porphyrin-containing compound metabolism; chlorophyll biosynthesis (light-independent). Its function is as follows. Component of the dark-operative protochlorophyllide reductase (DPOR) that uses Mg-ATP and reduced ferredoxin to reduce ring D of protochlorophyllide (Pchlide) to form chlorophyllide a (Chlide). This reaction is light-independent. The NB-protein (ChlN-ChlB) is the catalytic component of the complex. In Pinus thunbergii (Japanese black pine), this protein is Light-independent protochlorophyllide reductase subunit N.